Consider the following 367-residue polypeptide: Outer membrane protein P2 (367 aa).

The N-terminal stretch at 1-20 is a signal peptide; that stretch reads MKKTLAALIVGAFAASAANA.

This sequence belongs to the Gram-negative porin family. Homotrimer.

Its subcellular location is the cell outer membrane. In terms of biological role, forms pores that allow passive diffusion of small molecules across the outer membrane. This Haemophilus influenzae protein is Outer membrane protein P2 (ompP2).